Consider the following 486-residue polypeptide: L-arabinose isomerase (486 aa).

Glu299, Glu324, His341, and His440 together coordinate Mn(2+).

The protein belongs to the arabinose isomerase family. Mn(2+) is required as a cofactor.

The catalysed reaction is beta-L-arabinopyranose = L-ribulose. The protein operates within carbohydrate degradation; L-arabinose degradation via L-ribulose; D-xylulose 5-phosphate from L-arabinose (bacterial route): step 1/3. Functionally, catalyzes the conversion of L-arabinose to L-ribulose. The sequence is that of L-arabinose isomerase from Shouchella clausii (strain KSM-K16) (Alkalihalobacillus clausii).